Here is a 514-residue protein sequence, read N- to C-terminus: MTNIQAFMKNFLGASPEWYKLAIVVFLIINPIVFFFISPFIAGWLLVAEFIFTLAMALKCYPLQPGGLLAIEAIIIGMTNAKHVKAEIMANFEVILLLIFMVAGIFFMKQLLLYVFTKLLVKIRSKIALSIAFCFSAAFLSAFLDALTVVAVIISVAMGFYGVYHKVASGNNLIDAVDISDDRKIIEQQHEILEKFRAFLRSLMMHAGVGTALGGVMTVVGEPQNLIIAEQAKWNFMEFFLRMAPVTIPVFICGLLTCFLVEKFKLFGYGEKLPDEVWKILSDLDRTNSEKMSKQDKIKLGMQALIAIWLIVGLAFHLAAVGLIGLSIIIFATSFTGVTDEHTIGKAFQESLPFTALLVVFFSVVAVIIDQKLFSPIIHFVLSAEENTQLALFYLFNGLLSSISDNVFVATVYINEAKAALTNGVIAPHQFELLSVAINTGTNLPSVATPNGQAAFLFLLTSSISPLIRLSYGRMVYMALPYTIVLSIIGLLAIEFILPAATIWLASLGLILPI.

Helical transmembrane passes span 21-41 (LAIV…SPFI), 43-63 (GWLL…CYPL), 88-108 (IMAN…IFFM), 143-163 (FLDA…FYGV), 203-223 (LMMH…VGEP), 239-259 (FFLR…LTCF), 304-324 (ALIA…VGLI), 349-369 (QESL…AVII), 390-410 (LALF…VFVA), 448-468 (ATPN…SPLI), and 484-504 (IVLS…ATIW).

This sequence belongs to the NhaB Na(+)/H(+) (TC 2.A.34) antiporter family.

It is found in the cell inner membrane. It carries out the reaction 2 Na(+)(in) + 3 H(+)(out) = 2 Na(+)(out) + 3 H(+)(in). Its function is as follows. Na(+)/H(+) antiporter that extrudes sodium in exchange for external protons. The sequence is that of Na(+)/H(+) antiporter NhaB from Haemophilus influenzae (strain ATCC 51907 / DSM 11121 / KW20 / Rd).